The primary structure comprises 410 residues: Ribosomal protein S6 kinase-related protein (410 aa).

The Protein kinase domain maps to 107 to 274 (LKILGLVAKG…GTLQYMAPEV (168 aa)). ATP is bound by residues 113-121 (VAKGSFGTV) and K136. The active-site Proton acceptor is D229.

The protein belongs to the protein kinase superfamily. Ser/Thr protein kinase family.

The enzyme catalyses L-seryl-[protein] + ATP = O-phospho-L-seryl-[protein] + ADP + H(+). It carries out the reaction L-threonyl-[protein] + ATP = O-phospho-L-threonyl-[protein] + ADP + H(+). The sequence is that of Ribosomal protein S6 kinase-related protein from Homo sapiens (Human).